A 628-amino-acid chain; its full sequence is Growth hormone receptor (628 aa).

The N-terminal stretch at 1–18 (MDLWQLLLTLAVVGSSNA) is a signal peptide. Topologically, residues 19 to 266 (FVGREAVTVT…FTCEEEFQFP (248 aa)) are extracellular. Residues Asn33, Asn40, and Asn46 are each glycosylated (N-linked (GlcNAc...) asparagine). 2 disulfide bridges follow: Cys56-Cys66 and Cys101-Cys112. Asn115 carries N-linked (GlcNAc...) asparagine glycosylation. The cysteines at positions 126 and 140 are disulfide-linked. Residues 151–254 (PPTGLNWTLM…EILYITLPQS (104 aa)) enclose the Fibronectin type-III domain. N-linked (GlcNAc...) asparagine glycans are attached at residues Asn156, Asn161, and Asn200. The short motif at 240 to 244 (YGEFS) is the WSXWS motif element. The chain crosses the membrane as a helical span at residues 267 to 287 (WFLIMIFGIFGLTVMLLVVMF). Over 288–628 (SKQQRIKMLI…STDQLNKIML (341 aa)) the chain is Cytoplasmic. Residues 294-379 (KMLILPPVPV…HQKSLNILGA (86 aa)) form a required for JAK2 binding region. The short motif at 297–305 (ILPPVPVPK) is the Box 1 motif element. The UbE motif motif lies at 340 to 349 (DSWVEFIELD). Ser341 carries the phosphoserine modification. Tyr483 and Tyr585 each carry phosphotyrosine.

It belongs to the type I cytokine receptor family. Type 1 subfamily. On growth hormone (GH) binding, forms homodimers and binds JAK2 via a box 1-containing domain. The soluble form (GHBP) is produced by phorbol ester-promoted proteolytic cleavage at the cell surface (shedding) by ADAM17/TACE. Shedding is inhibited by growth hormone (GH) binding to the receptor probably due to a conformational change in GHR rendering the receptor inaccessible to ADAM17. In terms of processing, on GH binding, phosphorylated on tyrosine residues in the cytoplasmic domain by JAK2. Post-translationally, ubiquitinated by the ECS(SOCS2) complex following ligand-binding and phosphorylation by JAK2, leading to its degradation by the proteasome. Regulation by the ECS(SOCS2) complex acts as a negative feedback loop of growth hormone receptor signaling. Ubiquitination is not sufficient for GHR internalization.

The protein localises to the cell membrane. The protein resides in the secreted. Its function is as follows. Receptor for pituitary gland growth hormone (GH1) involved in regulating postnatal body growth. On ligand binding, couples to the JAK2/STAT5 pathway. Functionally, the soluble form (GHBP) acts as a reservoir of growth hormone in plasma and may be a modulator/inhibitor of GH signaling. The polypeptide is Growth hormone receptor (GHR) (Cavia porcellus (Guinea pig)).